The following is a 314-amino-acid chain: MSIDLEKNHNRIYSMNINSMNRDPEFYLKKAKYFYSKSQENVDSDSTDSDNEKNNSTKNVSRNIPKNIPKSISKNIPKNVPRNIPKSIPKNVSKNIPKNVPKNVSKNIPKNIPKNVPNKSRNKYSNYSEDSNYSEDSDYSSDESNSINTVYSDEVDSESIYSDYSDDNDQNNVQNNVQNNVENEDDYDYEYVKMEPVDLAQLIEEHTDLRSKIKPKYTRFYDPVTRHYYSIDKLFEHEDVLLNKRPTTGVWYPEIQNQNNIMKDPKTGQLFRVKKIYNPKGKYHYEINSVKRQTKRKPGTTYYTVTYEDLDPLD.

A disordered region spans residues Gln-39–Ser-146. Residues Ser-56–Ile-76 show a composition bias toward polar residues. Residues Ile-88–Ser-131 show a composition bias toward low complexity. Over residues Asn-132 to Ser-141 the composition is skewed to acidic residues.

This is an uncharacterized protein from Acanthamoeba polyphaga mimivirus (APMV).